The primary structure comprises 451 residues: Serine--tRNA ligase (451 aa).

247–249 (TAE) provides a ligand contact to L-serine. ATP contacts are provided by residues 278–280 (RKE) and V294. E301 contributes to the L-serine binding site. ATP is bound at residue 365–368 (ELAS). L-serine is bound at residue T400.

It belongs to the class-II aminoacyl-tRNA synthetase family. Type-1 seryl-tRNA synthetase subfamily. In terms of assembly, homodimer. The tRNA molecule binds across the dimer.

The protein resides in the cytoplasm. It carries out the reaction tRNA(Ser) + L-serine + ATP = L-seryl-tRNA(Ser) + AMP + diphosphate + H(+). It catalyses the reaction tRNA(Sec) + L-serine + ATP = L-seryl-tRNA(Sec) + AMP + diphosphate + H(+). It functions in the pathway aminoacyl-tRNA biosynthesis; selenocysteinyl-tRNA(Sec) biosynthesis; L-seryl-tRNA(Sec) from L-serine and tRNA(Sec): step 1/1. Its function is as follows. Catalyzes the attachment of serine to tRNA(Ser). Is also able to aminoacylate tRNA(Sec) with serine, to form the misacylated tRNA L-seryl-tRNA(Sec), which will be further converted into selenocysteinyl-tRNA(Sec). In Pyrobaculum aerophilum (strain ATCC 51768 / DSM 7523 / JCM 9630 / CIP 104966 / NBRC 100827 / IM2), this protein is Serine--tRNA ligase.